A 458-amino-acid chain; its full sequence is LysM domain-containing protein ARB_05157 (458 aa).

Residues Met1–Gly19 form the signal peptide. The LysM 1 domain maps to Ala157–Val203. The segment at Pro210–Pro232 is disordered. A compositionally biased stretch (polar residues) spans Lys212–Ile229. 3 consecutive LysM domains span residues Lys245–Val291, Lys325–Val371, and Lys409–Val455.

It is found in the secreted. Might have a role in sequestration of chitin oligosaccharides (breakdown products of fungal cell walls that are released during invasion and act as triggers of host immunity) to dampen host defense. The protein is LysM domain-containing protein ARB_05157 of Arthroderma benhamiae (strain ATCC MYA-4681 / CBS 112371) (Trichophyton mentagrophytes).